A 147-amino-acid polypeptide reads, in one-letter code: Protein disulfide isomerase-like 5-1 (147 aa).

An N-terminal signal peptide occupies residues 1–29 (MDLAPGRRARLLVALALVVLVALAARSGA). The region spanning 30–137 (EVITLTEETF…LKNFVSDEAE (108 aa)) is the Thioredoxin domain. Residues Cys-59 and Cys-62 each act as nucleophile in the active site. An intrachain disulfide couples Cys-59 to Cys-62.

The protein belongs to the protein disulfide isomerase family.

Functionally, acts as a protein-folding catalyst that interacts with nascent polypeptides to catalyze the formation, isomerization, and reduction or oxidation of disulfide bonds. May play a role in storage protein biogenesis. The chain is Protein disulfide isomerase-like 5-1 (PDIL5-1) from Oryza sativa subsp. japonica (Rice).